The sequence spans 429 residues: Gamma-glutamyl phosphate reductase (429 aa).

This sequence belongs to the gamma-glutamyl phosphate reductase family.

The protein resides in the cytoplasm. It catalyses the reaction L-glutamate 5-semialdehyde + phosphate + NADP(+) = L-glutamyl 5-phosphate + NADPH + H(+). It functions in the pathway amino-acid biosynthesis; L-proline biosynthesis; L-glutamate 5-semialdehyde from L-glutamate: step 2/2. In terms of biological role, catalyzes the NADPH-dependent reduction of L-glutamate 5-phosphate into L-glutamate 5-semialdehyde and phosphate. The product spontaneously undergoes cyclization to form 1-pyrroline-5-carboxylate. The chain is Gamma-glutamyl phosphate reductase from Rhizorhabdus wittichii (strain DSM 6014 / CCUG 31198 / JCM 15750 / NBRC 105917 / EY 4224 / RW1) (Sphingomonas wittichii).